A 421-amino-acid chain; its full sequence is Lipid II:glycine glycyltransferase (421 aa).

The protein belongs to the FemABX family. In terms of assembly, monomer.

It is found in the cytoplasm. The enzyme catalyses beta-D-GlcNAc-(1-&gt;4)-Mur2Ac(oyl-L-Ala-D-isoglutaminyl-L-Lys-D-Ala-D-Ala)-di-trans,octa-cis-undecaprenyl diphosphate + glycyl-tRNA(Gly) = beta-D-GlcNAc-(1-&gt;4)-Mur2Ac(oyl-L-Ala-D-isoglutaminyl-L-Lys-(N(6)-Gly)-D-Ala-D-Ala)-di-trans,octa-cis-undecaprenyl diphosphate + tRNA(Gly) + H(+). Its function is as follows. Catalyzes the incorporation of the first glycine of the pentaglycine interpeptide bridge, which is characteristic of the S.aureus peptidoglycan. This glycine is added to the epsilon-amino group of the L-lysine of the membrane-bound lipid II intermediate (GlcNAc-(beta-1,4)-N-acetylmuramic acid(-L-Ala-D-iGln-L-Lys-D-Ala-D-Ala)-pyrophosphoryl-undecaprenol), using glycyl-tRNA(Gly) as donor, in a ribosome-independent mechanism. Involved in methicillin resistance. The protein is Lipid II:glycine glycyltransferase (femX) of Staphylococcus aureus (strain MRSA252).